We begin with the raw amino-acid sequence, 402 residues long: B3 domain-containing protein Os01g0723500 (402 aa).

Positions 18 to 121 form a DNA-binding region, TF-B3 1; it reads RPHFFKVLVG…RFTAMVFDRT (104 aa). Residues 126–203 form a disordered region; it reads EDLMGGGGGD…VKNEEDADEL (78 aa). Over residues 152 to 162 the composition is skewed to basic and acidic residues; sequence DAARPKKDSVG. A compositionally biased stretch (polar residues) spans 173-186; that stretch reads SGGQPLQIVDSSWT. A DNA-binding region (TF-B3 2) is located at residues 289–381; that stretch reads CVIRMSTMHV…EFRVHIFRVV (93 aa).

It is found in the nucleus. This Oryza sativa subsp. japonica (Rice) protein is B3 domain-containing protein Os01g0723500.